We begin with the raw amino-acid sequence, 313 residues long: Ornithine carbamoyltransferase (313 aa).

Carbamoyl phosphate is bound by residues 57-60, glutamine 84, arginine 108, and 135-138; these read STRT and HPCQ. L-ornithine contacts are provided by residues asparagine 166, aspartate 230, and 234 to 235; that span reads SM. Carbamoyl phosphate-binding positions include 270-271 and arginine 298; that span reads CL.

This sequence belongs to the aspartate/ornithine carbamoyltransferase superfamily. OTCase family. Homohexamer.

The protein localises to the cytoplasm. It catalyses the reaction carbamoyl phosphate + L-ornithine = L-citrulline + phosphate + H(+). The protein operates within amino-acid biosynthesis; L-arginine biosynthesis; L-arginine from L-ornithine and carbamoyl phosphate: step 1/3. Functionally, reversibly catalyzes the transfer of the carbamoyl group from carbamoyl phosphate (CP) to the N(epsilon) atom of ornithine (ORN) to produce L-citrulline. The protein is Ornithine carbamoyltransferase of Gloeobacter violaceus (strain ATCC 29082 / PCC 7421).